The sequence spans 1598 residues: Transposon Ty2-LR2 Gag-Pol polyprotein (1598 aa).

3 stretches are compositionally biased toward polar residues: residues 1 to 11, 19 to 39, and 49 to 60; these read MESQQLHQNPH, ASVT…SASN, and KVNSQEETTPGT. Disordered regions lie at residues 1–88 and 359–449; these read MESQ…YQQH and QHSE…SNDE. The RNA-binding stretch occupies residues 295 to 397; the sequence is ENNINVSDRL…SSKPRAAKAH (103 aa). Residues 369 to 381 show a composition bias toward low complexity; sequence TSPNTTNTKVTTR. 2 stretches are compositionally biased toward polar residues: residues 399–408 and 415–435; these read IATSSKFSRV and ESTV…GQQQ. Asp-457 functions as the For protease activity; shared with dimeric partner in the catalytic mechanism. The segment at 579 to 636 is integrase-type zinc finger-like; it reads NVNKSKSVNKYPYPLIHRMLGHANFRSIQKSLKKNAVTYLKESDIEWSNASTYQCPDC. The Integrase catalytic domain occupies 656-831; it reads ESYEPFQYLH…AGLDITTILP (176 aa). The Mg(2+) site is built by Asp-667 and Asp-732. Polar residues-rich tracts occupy residues 915-927, 1009-1034, and 1065-1082; these read SFIE…QSYD, ESDT…STNE, and QRNS…STPS. Disordered stretches follow at residues 915-934, 1004-1034, 1059-1135, 1146-1165, and 1170-1205; these read SFIE…ESDH, MGGT…STNE, TEEP…KSSK, LPLP…VSKD, and HSRQ…TEIE. Over residues 1151–1165 the composition is skewed to basic and acidic residues; it reads LTHKSPTDTSDVSKD. The Bipartite nuclear localization signal signature appears at 1193–1227; sequence KKRSLEDNETEIEVSRDTWNNKNMRSLEPPRSKKR. One can recognise a Reverse transcriptase Ty1/copia-type domain in the interval 1353–1491; that stretch reads NDYYITQLDI…DILGLEIKYQ (139 aa). Asp-1361, Asp-1442, and Asp-1443 together coordinate Mg(2+).

As to quaternary structure, the capsid protein forms a homotrimer, from which the VLPs are assembled. The protease is a homodimer, whose active site consists of two apposed aspartic acid residues. Initially, virus-like particles (VLPs) are composed of the structural unprocessed proteins Gag and Gag-Pol, and also contain the host initiator methionine tRNA (tRNA(i)-Met) which serves as a primer for minus-strand DNA synthesis, and a dimer of genomic Ty RNA. Processing of the polyproteins occurs within the particle and proceeds by an ordered pathway, called maturation. First, the protease (PR) is released by autocatalytic cleavage of the Gag-Pol polyprotein, and this cleavage is a prerequisite for subsequent processing at the remaining sites to release the mature structural and catalytic proteins. Maturation takes place prior to the RT reaction and is required to produce transposition-competent VLPs.

It localises to the cytoplasm. Its subcellular location is the nucleus. The enzyme catalyses DNA(n) + a 2'-deoxyribonucleoside 5'-triphosphate = DNA(n+1) + diphosphate. It catalyses the reaction Endonucleolytic cleavage to 5'-phosphomonoester.. Capsid protein (CA) is the structural component of the virus-like particle (VLP), forming the shell that encapsulates the retrotransposons dimeric RNA genome. The particles are assembled from trimer-clustered units and there are holes in the capsid shells that allow for the diffusion of macromolecules. CA also has nucleocapsid-like chaperone activity, promoting primer tRNA(i)-Met annealing to the multipartite primer-binding site (PBS), dimerization of Ty2 RNA and initiation of reverse transcription. In terms of biological role, the aspartyl protease (PR) mediates the proteolytic cleavages of the Gag and Gag-Pol polyproteins after assembly of the VLP. Functionally, reverse transcriptase/ribonuclease H (RT) is a multifunctional enzyme that catalyzes the conversion of the retro-elements RNA genome into dsDNA within the VLP. The enzyme displays a DNA polymerase activity that can copy either DNA or RNA templates, and a ribonuclease H (RNase H) activity that cleaves the RNA strand of RNA-DNA heteroduplexes during plus-strand synthesis and hydrolyzes RNA primers. The conversion leads to a linear dsDNA copy of the retrotransposon that includes long terminal repeats (LTRs) at both ends. Its function is as follows. Integrase (IN) targets the VLP to the nucleus, where a subparticle preintegration complex (PIC) containing at least integrase and the newly synthesized dsDNA copy of the retrotransposon must transit the nuclear membrane. Once in the nucleus, integrase performs the integration of the dsDNA into the host genome. This Saccharomyces cerevisiae (strain ATCC 204508 / S288c) (Baker's yeast) protein is Transposon Ty2-LR2 Gag-Pol polyprotein (TY2B-LR2).